Consider the following 233-residue polypeptide: Orotidine 5'-phosphate decarboxylase (233 aa).

Residues D9, K31, D58–T67, T120, R182, Q191, G211, and R212 each bind substrate. K60 serves as the catalytic Proton donor.

Belongs to the OMP decarboxylase family. Type 1 subfamily. As to quaternary structure, homodimer.

It catalyses the reaction orotidine 5'-phosphate + H(+) = UMP + CO2. The protein operates within pyrimidine metabolism; UMP biosynthesis via de novo pathway; UMP from orotate: step 2/2. In terms of biological role, catalyzes the decarboxylation of orotidine 5'-monophosphate (OMP) to uridine 5'-monophosphate (UMP). The chain is Orotidine 5'-phosphate decarboxylase from Listeria monocytogenes serovar 1/2a (strain ATCC BAA-679 / EGD-e).